The chain runs to 843 residues: Neuroligin-1 (843 aa).

The N-terminal stretch at 1 to 45 (MALPRCMWPNYVWRAMMACVVHRGSGAPLTLCLLGCLLQTFHVLS) is a signal peptide. The Extracellular segment spans residues 46–697 (QKLDDVDPLV…DQRDYSTELS (652 aa)). An N-linked (GlcNAc...) (complex) asparagine glycan is attached at Asn109. A disulfide bridge links Cys117 with Cys153. The tract at residues 167–190 (LTKKHTDDLGDNDGAEDEDIRDSG) is disordered. The span at 175-186 (LGDNDGAEDEDI) shows a compositional bias: acidic residues. Residues Asn303 and Asn343 are each glycosylated (N-linked (GlcNAc...) (complex) asparagine). Cystine bridges form between Cys342–Cys353 and Cys512–Cys546. The N-linked (GlcNAc...) asparagine glycan is linked to Asn547. The segment at 647–688 (TKVPSTDITLRPTRKNSTPVTSAFPTAKQDDPKQQPSPFSVD) is disordered. Residues 661-670 (KNSTPVTSAF) are compositionally biased toward polar residues. 2 O-linked (GalNAc...) serine glycosylation sites follow: Ser683 and Ser686. A helical transmembrane segment spans residues 698 to 718 (VTIAVGASLLFLNILAFAALY). The Cytoplasmic segment spans residues 719-843 (YKKDKRRHDV…HPHSHSTTRV (125 aa)). Residues 822–843 (GGQNNTLPHPHPHPHSHSTTRV) are disordered. Over residues 831–843 (PHPHPHSHSTTRV) the composition is skewed to basic residues.

Belongs to the type-B carboxylesterase/lipase family. As to quaternary structure, interacts with neurexins NRXN1, NRXN2 and NRXN3. Interaction with neurexins is mediated by heparan sulfate glycan modification on neurexin. Interacts (via its C-terminus) with DLG4/PSD-95 (via PDZ domain 3). Interacts with AIP1, GOPC and PDZRN3. Interacts with NLGN3. Brain and arteries (at protein level). Expressed in olfactory bulb. Detected in brain.

It is found in the cell membrane. It localises to the postsynaptic density. Its subcellular location is the synaptic cleft. The protein localises to the synaptic cell membrane. Functionally, cell surface protein involved in cell-cell-interactions via its interactions with neurexin family members. Plays a role in synapse function and synaptic signal transmission, and probably mediates its effects by recruiting and clustering other synaptic proteins. May promote the initial formation of synapses, but is not essential for this. In vitro, triggers the de novo formation of presynaptic structures. May be involved in specification of excitatory synapses. Required to maintain wakefulness quality and normal synchrony of cerebral cortex activity during wakefulness and sleep. The protein is involved in nervous system development. This is Neuroligin-1 (Nlgn1) from Mus musculus (Mouse).